Here is a 301-residue protein sequence, read N- to C-terminus: Nucleotide-binding protein Helmi_06460 (301 aa).

17–24 contributes to the ATP binding site; it reads GLSGAGKS. 68–71 serves as a coordination point for GTP; it reads DIRG.

It belongs to the RapZ-like family.

In terms of biological role, displays ATPase and GTPase activities. In Heliobacterium modesticaldum (strain ATCC 51547 / Ice1), this protein is Nucleotide-binding protein Helmi_06460.